The sequence spans 350 residues: N-acetyl-gamma-glutamyl-phosphate reductase (350 aa).

The active site involves cysteine 153.

Belongs to the NAGSA dehydrogenase family. Type 1 subfamily.

It is found in the cytoplasm. The catalysed reaction is N-acetyl-L-glutamate 5-semialdehyde + phosphate + NADP(+) = N-acetyl-L-glutamyl 5-phosphate + NADPH + H(+). Its pathway is amino-acid biosynthesis; L-arginine biosynthesis; N(2)-acetyl-L-ornithine from L-glutamate: step 3/4. Functionally, catalyzes the NADPH-dependent reduction of N-acetyl-5-glutamyl phosphate to yield N-acetyl-L-glutamate 5-semialdehyde. The polypeptide is N-acetyl-gamma-glutamyl-phosphate reductase (Gloeobacter violaceus (strain ATCC 29082 / PCC 7421)).